A 202-amino-acid chain; its full sequence is Holliday junction branch migration complex subunit RuvA (202 aa).

The interval 1–65 (MIAYVEGRVA…EDALELFGFS (65 aa)) is domain I. A domain II region spans residues 66–144 (TWDERQTFMV…VEDLPAGLVL (79 aa)). The flexible linker stretch occupies residues 145–155 (AGGAAPGGVFR). The interval 155-202 (RDALAGLGNLGYLEDEAAPVLKEVLKAEPDLDVAGALRAALKALARGR) is domain III.

It belongs to the RuvA family. As to quaternary structure, homotetramer. Forms an RuvA(8)-RuvB(12)-Holliday junction (HJ) complex. HJ DNA is sandwiched between 2 RuvA tetramers; dsDNA enters through RuvA and exits via RuvB. An RuvB hexamer assembles on each DNA strand where it exits the tetramer. Each RuvB hexamer is contacted by two RuvA subunits (via domain III) on 2 adjacent RuvB subunits; this complex drives branch migration. In the full resolvosome a probable DNA-RuvA(4)-RuvB(12)-RuvC(2) complex forms which resolves the HJ.

It is found in the cytoplasm. The RuvA-RuvB-RuvC complex processes Holliday junction (HJ) DNA during genetic recombination and DNA repair, while the RuvA-RuvB complex plays an important role in the rescue of blocked DNA replication forks via replication fork reversal (RFR). RuvA specifically binds to HJ cruciform DNA, conferring on it an open structure. The RuvB hexamer acts as an ATP-dependent pump, pulling dsDNA into and through the RuvAB complex. HJ branch migration allows RuvC to scan DNA until it finds its consensus sequence, where it cleaves and resolves the cruciform DNA. The protein is Holliday junction branch migration complex subunit RuvA of Nitratidesulfovibrio vulgaris (strain DSM 19637 / Miyazaki F) (Desulfovibrio vulgaris).